A 515-amino-acid polypeptide reads, in one-letter code: 2-isopropylmalate synthase (515 aa).

The 263-residue stretch at 5–267 (VIIFDTTLRD…HTSLKNDEIH (263 aa)) folds into the Pyruvate carboxyltransferase domain. Residues D14, H202, H204, and N238 each contribute to the Mn(2+) site. A regulatory domain region spans residues 392–515 (KLNYLSVQSG…EIKQNKITTV (124 aa)).

It belongs to the alpha-IPM synthase/homocitrate synthase family. LeuA type 1 subfamily. As to quaternary structure, homodimer. Mn(2+) is required as a cofactor.

The protein localises to the cytoplasm. The enzyme catalyses 3-methyl-2-oxobutanoate + acetyl-CoA + H2O = (2S)-2-isopropylmalate + CoA + H(+). The protein operates within amino-acid biosynthesis; L-leucine biosynthesis; L-leucine from 3-methyl-2-oxobutanoate: step 1/4. Functionally, catalyzes the condensation of the acetyl group of acetyl-CoA with 3-methyl-2-oxobutanoate (2-ketoisovalerate) to form 3-carboxy-3-hydroxy-4-methylpentanoate (2-isopropylmalate). The polypeptide is 2-isopropylmalate synthase (Aliivibrio salmonicida (strain LFI1238) (Vibrio salmonicida (strain LFI1238))).